Here is a 177-residue protein sequence, read N- to C-terminus: ATP synthase subunit delta (177 aa).

Belongs to the ATPase delta chain family. F-type ATPases have 2 components, F(1) - the catalytic core - and F(0) - the membrane proton channel. F(1) has five subunits: alpha(3), beta(3), gamma(1), delta(1), epsilon(1). F(0) has three main subunits: a(1), b(2) and c(10-14). The alpha and beta chains form an alternating ring which encloses part of the gamma chain. F(1) is attached to F(0) by a central stalk formed by the gamma and epsilon chains, while a peripheral stalk is formed by the delta and b chains.

Its subcellular location is the cell inner membrane. Its function is as follows. F(1)F(0) ATP synthase produces ATP from ADP in the presence of a proton or sodium gradient. F-type ATPases consist of two structural domains, F(1) containing the extramembraneous catalytic core and F(0) containing the membrane proton channel, linked together by a central stalk and a peripheral stalk. During catalysis, ATP synthesis in the catalytic domain of F(1) is coupled via a rotary mechanism of the central stalk subunits to proton translocation. Functionally, this protein is part of the stalk that links CF(0) to CF(1). It either transmits conformational changes from CF(0) to CF(1) or is implicated in proton conduction. This chain is ATP synthase subunit delta, found in Shewanella putrefaciens (strain CN-32 / ATCC BAA-453).